A 228-amino-acid polypeptide reads, in one-letter code: MERVRMINVQRLLEAAEFLERRERECEHGYASSFPSMPSPRLQHSKPPRRLSRAQKHSSGSSNTSTANRSTHNELEKNRRAHLRLCLERLKVLIPLGPDCTRHTTLGLLNKAKAHIKKLEEAERKSQHQLENLEREQRFLKRRLEQLQGPQEMERIRMDSIGSTISSDRSDSEREEIEVDVESTEFSHGEADSVSTTSISDLDDHSSLQSVGSDEGYSSASVKLSFAS.

Disordered regions lie at residues 30–76 (YASS…NELE) and 160–228 (SIGS…SFAS). Residues 43–56 (QHSKPPRRLSRAQK) show a composition bias toward basic residues. The span at 57 to 70 (HSSGSSNTSTANRS) shows a compositional bias: polar residues. A bHLH domain is found at 67-119 (ANRSTHNELEKNRRAHLRLCLERLKVLIPLGPDCTRHTTLGLLNKAKAHIKKL). Acidic residues predominate over residues 173–183 (EREEIEVDVES). The segment covering 207 to 228 (SLQSVGSDEGYSSASVKLSFAS) has biased composition (polar residues).

Efficient DNA binding requires dimerization with another bHLH protein. Binds DNA as a heterodimer with MAX. Interacts with SMC3. Interacts with RNF17.

The protein resides in the nucleus. In terms of biological role, transcriptional repressor. MXI1 binds with MAX to form a sequence-specific DNA-binding protein complex which recognizes the core sequence 5'-CAC[GA]TG-3'. MXI1 thus antagonizes MYC transcriptional activity by competing for MAX. Isoform Short, which lacks a segment, has a much stronger suppressive potential and associates with a SIN3 homologous protein. This Mus musculus (Mouse) protein is Max-interacting protein 1 (Mxi1).